The chain runs to 152 residues: Transcriptional regulator MraZ (152 aa).

SpoVT-AbrB domains follow at residues 5–52 (ASAI…PLHE) and 81–124 (AHEV…DEQA).

The protein belongs to the MraZ family. Forms oligomers.

It is found in the cytoplasm. The protein localises to the nucleoid. The chain is Transcriptional regulator MraZ from Shewanella sp. (strain MR-7).